A 363-amino-acid chain; its full sequence is NADH-quinone oxidoreductase subunit H (363 aa).

Transmembrane regions (helical) follow at residues 29 to 49 (VLKI…YVVW), 62 to 82 (GPMY…KLLF), 96 to 116 (FVIA…VVPF), 127 to 147 (VGLL…ILAG), 163 to 183 (AAQV…VMIA), 202 to 222 (FFDW…VSGV), 238 to 257 (EIVA…LFFL), 264 to 286 (ILVS…QGWV), 299 to 319 (KGGW…YIWF), and 339 to 359 (FIPL…YGVI).

It belongs to the complex I subunit 1 family. As to quaternary structure, NDH-1 is composed of 14 different subunits. Subunits NuoA, H, J, K, L, M, N constitute the membrane sector of the complex.

Its subcellular location is the cell inner membrane. The enzyme catalyses a quinone + NADH + 5 H(+)(in) = a quinol + NAD(+) + 4 H(+)(out). In terms of biological role, NDH-1 shuttles electrons from NADH, via FMN and iron-sulfur (Fe-S) centers, to quinones in the respiratory chain. The immediate electron acceptor for the enzyme in this species is believed to be ubiquinone. Couples the redox reaction to proton translocation (for every two electrons transferred, four hydrogen ions are translocated across the cytoplasmic membrane), and thus conserves the redox energy in a proton gradient. This subunit may bind ubiquinone. In Xanthomonas euvesicatoria pv. vesicatoria (strain 85-10) (Xanthomonas campestris pv. vesicatoria), this protein is NADH-quinone oxidoreductase subunit H.